Here is a 363-residue protein sequence, read N- to C-terminus: Peptide-N(4)-(N-acetyl-beta-glucosaminyl)asparagine amidase (363 aa).

Cys129, Cys132, Cys165, and Cys168 together coordinate Zn(2+). Cys191 functions as the Nucleophile in the catalytic mechanism. Residues His218 and Asp235 contribute to the active site. Position 238 (Glu238) interacts with substrate. Residues 325 to 363 form a disordered region; that stretch reads RGKTQETKSESVSAASKSSNRGRESGSADWKAQRGEDGK. A compositionally biased stretch (low complexity) spans 334-343; the sequence is ESVSAASKSS. The span at 345–363 shows a compositional bias: basic and acidic residues; it reads RGRESGSADWKAQRGEDGK.

This sequence belongs to the transglutaminase-like superfamily. PNGase family. Interacts with RAD23 subunit of 26S proteasome. The cofactor is Zn(2+).

Its subcellular location is the cytoplasm. The protein localises to the nucleus. It carries out the reaction Hydrolysis of an N(4)-(acetyl-beta-D-glucosaminyl)asparagine residue in which the glucosamine residue may be further glycosylated, to yield a (substituted) N-acetyl-beta-D-glucosaminylamine and a peptide containing an aspartate residue.. With respect to regulation, inhibited by Z-VAD-fmk, a well-known caspase inhibitor. Also inhibited by Man9GlcNAc2-iodoacetoamide. Both molecules inhibit enzyme activity through covalent binding of the carbohydrate to the single Cys-191 residue. Its function is as follows. Specifically deglycosylates the denatured form of N-linked glycoproteins in the cytoplasm and assists their proteasome-mediated degradation. Cleaves the beta-aspartyl-glucosamine (GlcNAc) of the glycan and the amide side chain of Asn, converting Asn to Asp. Prefers proteins containing high-mannose over those bearing complex type oligosaccharides. Can recognize misfolded proteins in the endoplasmic reticulum that are exported to the cytosol to be destroyed and deglycosylate them, while it has no activity toward native proteins. Deglycosylation is a prerequisite for subsequent proteasome-mediated degradation of some, but not all, misfolded glycoproteins. Involved in the formation of free oligosaccharide in cytosol. The polypeptide is Peptide-N(4)-(N-acetyl-beta-glucosaminyl)asparagine amidase (PNG1) (Saccharomyces cerevisiae (strain ATCC 204508 / S288c) (Baker's yeast)).